We begin with the raw amino-acid sequence, 238 residues long: Ubiquinone biosynthesis O-methyltransferase (238 aa).

Residues Arg-39, Gly-59, Asp-80, and Met-124 each coordinate S-adenosyl-L-methionine.

The protein belongs to the methyltransferase superfamily. UbiG/COQ3 family.

It carries out the reaction a 3-demethylubiquinol + S-adenosyl-L-methionine = a ubiquinol + S-adenosyl-L-homocysteine + H(+). The enzyme catalyses a 3-(all-trans-polyprenyl)benzene-1,2-diol + S-adenosyl-L-methionine = a 2-methoxy-6-(all-trans-polyprenyl)phenol + S-adenosyl-L-homocysteine + H(+). Its pathway is cofactor biosynthesis; ubiquinone biosynthesis. Functionally, O-methyltransferase that catalyzes the 2 O-methylation steps in the ubiquinone biosynthetic pathway. This chain is Ubiquinone biosynthesis O-methyltransferase, found in Aeromonas salmonicida (strain A449).